Consider the following 88-residue polypeptide: CRISPR-associated endoribonuclease Cas2 2 (88 aa).

Position 8 (Asp-8) interacts with Mg(2+).

Belongs to the CRISPR-associated endoribonuclease Cas2 protein family. In terms of assembly, homodimer, forms a heterotetramer with a Cas1 homodimer. Requires Mg(2+) as cofactor.

CRISPR (clustered regularly interspaced short palindromic repeat), is an adaptive immune system that provides protection against mobile genetic elements (viruses, transposable elements and conjugative plasmids). CRISPR clusters contain sequences complementary to antecedent mobile elements and target invading nucleic acids. CRISPR clusters are transcribed and processed into CRISPR RNA (crRNA). Functions as a ssRNA-specific endoribonuclease. Involved in the integration of spacer DNA into the CRISPR cassette. The protein is CRISPR-associated endoribonuclease Cas2 2 (cas22) of Saccharolobus solfataricus (strain ATCC 35092 / DSM 1617 / JCM 11322 / P2) (Sulfolobus solfataricus).